A 338-amino-acid chain; its full sequence is Lipoate-protein ligase A (338 aa).

The BPL/LPL catalytic domain occupies 29–216 (PATQRVLFLW…AFFAHYGERI (188 aa)). Residues arginine 71, 76-79 (GAVF), and lysine 134 each bind ATP. Lysine 134 lines the (R)-lipoate pocket.

The protein belongs to the LplA family. As to quaternary structure, monomer.

It is found in the cytoplasm. It carries out the reaction L-lysyl-[lipoyl-carrier protein] + (R)-lipoate + ATP = N(6)-[(R)-lipoyl]-L-lysyl-[lipoyl-carrier protein] + AMP + diphosphate + H(+). Its pathway is protein modification; protein lipoylation via exogenous pathway; protein N(6)-(lipoyl)lysine from lipoate: step 1/2. It participates in protein modification; protein lipoylation via exogenous pathway; protein N(6)-(lipoyl)lysine from lipoate: step 2/2. In terms of biological role, catalyzes both the ATP-dependent activation of exogenously supplied lipoate to lipoyl-AMP and the transfer of the activated lipoyl onto the lipoyl domains of lipoate-dependent enzymes. This is Lipoate-protein ligase A from Salmonella paratyphi A (strain ATCC 9150 / SARB42).